Here is a 273-residue protein sequence, read N- to C-terminus: Dermonecrotic toxin LapSicTox-alphaIB1ai (273 aa).

The active site involves histidine 5. Positions 25 and 27 each coordinate Mg(2+). Histidine 41 (nucleophile) is an active-site residue. Disulfide bonds link cysteine 45/cysteine 51 and cysteine 47/cysteine 190. Mg(2+) is bound at residue aspartate 85. Asparagine 250 carries N-linked (GlcNAc...) asparagine glycosylation.

The protein belongs to the arthropod phospholipase D family. Class II subfamily. It depends on Mg(2+) as a cofactor. As to expression, expressed by the venom gland.

The protein resides in the secreted. It catalyses the reaction an N-(acyl)-sphingosylphosphocholine = an N-(acyl)-sphingosyl-1,3-cyclic phosphate + choline. The catalysed reaction is an N-(acyl)-sphingosylphosphoethanolamine = an N-(acyl)-sphingosyl-1,3-cyclic phosphate + ethanolamine. It carries out the reaction a 1-acyl-sn-glycero-3-phosphocholine = a 1-acyl-sn-glycero-2,3-cyclic phosphate + choline. The enzyme catalyses a 1-acyl-sn-glycero-3-phosphoethanolamine = a 1-acyl-sn-glycero-2,3-cyclic phosphate + ethanolamine. Functionally, dermonecrotic toxins cleave the phosphodiester linkage between the phosphate and headgroup of certain phospholipids (sphingolipid and lysolipid substrates), forming an alcohol (often choline) and a cyclic phosphate. This toxin acts on sphingomyelin (SM). It may also act on ceramide phosphoethanolamine (CPE), lysophosphatidylcholine (LPC) and lysophosphatidylethanolamine (LPE), but not on lysophosphatidylserine (LPS), and lysophosphatidylglycerol (LPG). It acts by transphosphatidylation, releasing exclusively cyclic phosphate products as second products. Induces dermonecrosis, hemolysis, increased vascular permeability, edema, inflammatory response, and platelet aggregation. In Loxosceles apachea (Apache recluse spider), this protein is Dermonecrotic toxin LapSicTox-alphaIB1ai.